The following is a 1168-amino-acid chain: Probable serine/threonine protein kinase IRE (1168 aa).

Disordered regions lie at residues 1-165 (MSTT…GVES) and 377-444 (EKQN…KIQP). Residues 16 to 25 (PTTISTPTST) show a composition bias toward low complexity. Composition is skewed to basic and acidic residues over residues 39 to 54 (RHSDKEGEDEQAKTDE) and 107 to 130 (QDDKDVAKEKPRVGVVDARADARA). 2 stretches are compositionally biased toward polar residues: residues 146-163 (QWSQSKSQRVPANSNPGV) and 401-414 (TARSTDSTSSNFRM). Residues 488–507 (CRICEVEIPVVHVEEHSRIC) form a C2H2-type; atypical zinc finger. Disordered regions lie at residues 546–566 (PRAVADSARLSNSSRQEDLDE), 602–622 (GTKDSSAGSLTPPSPATPRNS), and 717–744 (SSNAMPDEESSADEDTVRSLRASPLNPR). The 290-residue stretch at 754-1043 (FEIIKPISRG…AGEVKQHHFF (290 aa)) folds into the Protein kinase domain. ATP contacts are provided by residues 760-768 (ISRGAFGRV) and K783. The active-site Proton acceptor is D877. The region spanning 1044–1144 (KDINWDTLAR…KNLSQLASIN (101 aa)) is the AGC-kinase C-terminal domain.

This sequence belongs to the protein kinase superfamily. AGC Ser/Thr protein kinase family. Highly expressed in roots, elongating root hair cells and pollen grains.

The enzyme catalyses L-seryl-[protein] + ATP = O-phospho-L-seryl-[protein] + ADP + H(+). It carries out the reaction L-threonyl-[protein] + ATP = O-phospho-L-threonyl-[protein] + ADP + H(+). Functionally, modulates root tip growth. May play a common role in the tip growth of plant cells. The protein is Probable serine/threonine protein kinase IRE of Arabidopsis thaliana (Mouse-ear cress).